We begin with the raw amino-acid sequence, 167 residues long: Sporulation membrane protein YtrI (167 aa).

Residues 15–35 form a helical membrane-spanning segment; that stretch reads FFAGMMCGAVISWFFFLFTYG.

It localises to the cell membrane. Functionally, involved in sporulation. In Bacillus subtilis (strain 168), this protein is Sporulation membrane protein YtrI (ytrI).